Reading from the N-terminus, the 355-residue chain is Protein RecA (355 aa).

65–72 provides a ligand contact to ATP; it reads GPESSGKT.

Belongs to the RecA family.

Its subcellular location is the cytoplasm. Functionally, can catalyze the hydrolysis of ATP in the presence of single-stranded DNA, the ATP-dependent uptake of single-stranded DNA by duplex DNA, and the ATP-dependent hybridization of homologous single-stranded DNAs. It interacts with LexA causing its activation and leading to its autocatalytic cleavage. The chain is Protein RecA from Pseudomonas entomophila (strain L48).